Here is a 121-residue protein sequence, read N- to C-terminus: Large ribosomal subunit protein bL20 (121 aa).

This sequence belongs to the bacterial ribosomal protein bL20 family.

Its function is as follows. Binds directly to 23S ribosomal RNA and is necessary for the in vitro assembly process of the 50S ribosomal subunit. It is not involved in the protein synthesizing functions of that subunit. This Wolbachia sp. subsp. Drosophila simulans (strain wRi) protein is Large ribosomal subunit protein bL20.